The primary structure comprises 550 residues: Dihydroxy-acid dehydratase (550 aa).

A Mg(2+)-binding site is contributed by Asp-78. Residue Cys-119 coordinates [2Fe-2S] cluster. Residues Asp-120 and Lys-121 each coordinate Mg(2+). Lys-121 bears the N6-carboxylysine mark. Cys-191 contributes to the [2Fe-2S] cluster binding site. Glu-440 contributes to the Mg(2+) binding site. Ser-466 acts as the Proton acceptor in catalysis.

The protein belongs to the IlvD/Edd family. Homodimer. It depends on [2Fe-2S] cluster as a cofactor. Mg(2+) serves as cofactor.

The enzyme catalyses (2R)-2,3-dihydroxy-3-methylbutanoate = 3-methyl-2-oxobutanoate + H2O. It catalyses the reaction (2R,3R)-2,3-dihydroxy-3-methylpentanoate = (S)-3-methyl-2-oxopentanoate + H2O. It participates in amino-acid biosynthesis; L-isoleucine biosynthesis; L-isoleucine from 2-oxobutanoate: step 3/4. It functions in the pathway amino-acid biosynthesis; L-valine biosynthesis; L-valine from pyruvate: step 3/4. Functionally, functions in the biosynthesis of branched-chain amino acids. Catalyzes the dehydration of (2R,3R)-2,3-dihydroxy-3-methylpentanoate (2,3-dihydroxy-3-methylvalerate) into 2-oxo-3-methylpentanoate (2-oxo-3-methylvalerate) and of (2R)-2,3-dihydroxy-3-methylbutanoate (2,3-dihydroxyisovalerate) into 2-oxo-3-methylbutanoate (2-oxoisovalerate), the penultimate precursor to L-isoleucine and L-valine, respectively. This is Dihydroxy-acid dehydratase from Methanococcus aeolicus (strain ATCC BAA-1280 / DSM 17508 / OCM 812 / Nankai-3).